A 373-amino-acid polypeptide reads, in one-letter code: GDP-mannose 4,6-dehydratase (373 aa).

Residues 9–14, 64–65, 86–90, and Y101 contribute to the NADP(+) site; these read GVTGQD, DL, and LGAMS. T133 is a catalytic residue. Residues E135 and Y157 each act as nucleophile in the active site. NADP(+)-binding residues include K161, H187, and R192.

The protein belongs to the NAD(P)-dependent epimerase/dehydratase family. GDP-mannose 4,6-dehydratase subfamily. It depends on NADP(+) as a cofactor.

The enzyme catalyses GDP-alpha-D-mannose = GDP-4-dehydro-alpha-D-rhamnose + H2O. It functions in the pathway nucleotide-sugar biosynthesis; GDP-L-fucose biosynthesis via de novo pathway; GDP-L-fucose from GDP-alpha-D-mannose: step 1/2. Functionally, catalyzes the conversion of GDP-D-mannose to GDP-4-dehydro-6-deoxy-D-mannose. This is GDP-mannose 4,6-dehydratase from Escherichia coli O157:H7.